Reading from the N-terminus, the 270-residue chain is Shikimate dehydrogenase (NADP(+)) (270 aa).

Shikimate is bound by residues 14-16 (SKS) and Thr61. Lys65 functions as the Proton acceptor in the catalytic mechanism. The shikimate site is built by Asn86 and Asp101. NADP(+)-binding positions include 126-130 (GAGGA), 150-155 (NRTVDK), and Met215. Tyr217 lines the shikimate pocket. Gly238 provides a ligand contact to NADP(+).

The protein belongs to the shikimate dehydrogenase family. As to quaternary structure, homodimer.

The enzyme catalyses shikimate + NADP(+) = 3-dehydroshikimate + NADPH + H(+). It participates in metabolic intermediate biosynthesis; chorismate biosynthesis; chorismate from D-erythrose 4-phosphate and phosphoenolpyruvate: step 4/7. Involved in the biosynthesis of the chorismate, which leads to the biosynthesis of aromatic amino acids. Catalyzes the reversible NADPH linked reduction of 3-dehydroshikimate (DHSA) to yield shikimate (SA). This is Shikimate dehydrogenase (NADP(+)) from Methylobacillus flagellatus (strain ATCC 51484 / DSM 6875 / VKM B-1610 / KT).